Consider the following 256-residue polypeptide: Histone H1 (256 aa).

Low complexity-rich tracts occupy residues 1–19 (MSDS…PPAT) and 27–43 (KKAS…ASAT). 2 disordered regions span residues 1 to 53 (MSDS…QQMV) and 108 to 256 (GKGA…AAKK). Ser11 is modified (phosphoserine). Positions 45 to 119 (SHPPTQQMVD…GASGSFKLSA (75 aa)) constitute an H15 domain. Composition is skewed to basic and acidic residues over residues 121–140 (AKKE…EKKV) and 176–193 (KTAE…DAKK). Positions 194–229 (TGIIKSKPAATKAKVTAAKPKAVVAKASKAKPAVSA) are enriched in low complexity. Positions 245-256 (KKPKAKTTAAKK) are enriched in basic residues.

The protein belongs to the histone H1/H5 family. In terms of processing, phosphorylated in oocytes during prophase I of meiosis.

Its subcellular location is the nucleus. It localises to the chromosome. In terms of biological role, histones H1 are necessary for the condensation of nucleosome chains into higher-order structures. The polypeptide is Histone H1 (His1) (Drosophila melanogaster (Fruit fly)).